Reading from the N-terminus, the 156-residue chain is MSDLDRLASRAAIQDLYSDKLIAVDKRQEGRLASIWWDDAEWTIEGIGTYKGPEGALDLANNVLWPMFHECIHYGTNLRLEFVSADKVNGIGDVLLLGNLVEGNQSILIAAVFTDEYERRDGVWKFSKRNACTNYFTPLAGIHFAPPGIHFAPSGA.

The active site involves aspartate 25. Histidine 73 acts as the Proton acceptor in catalysis.

The protein belongs to the HCH dehydrochlorinase family. Homotrimer.

The protein localises to the periplasm. The enzyme catalyses gamma-hexachlorocyclohexane = (3R,4S,5S,6R)-pentachlorocyclohexene + chloride + H(+). It carries out the reaction (3R,4S,5S,6R)-pentachlorocyclohexene = (3R,6R)-1,3,4,6-tetrachlorocyclohexa-1,4-diene + chloride + H(+). The protein operates within xenobiotic degradation; hexachlorocyclohexane degradation. Its function is as follows. Catalyzes the conversion of the important environmental pollutant gamma-hexachlorocyclohexane (gamma-HCH or lindane) to 1,3,4,6-tetrachloro-1,4-cyclohexadiene (1,4-TCDN) via gamma-pentachlorocyclohexene (gamma-PCCH). Proceeds by two successive 1,2-anti conformationally dependent dehydrochlorinations. Also shows activity with alpha- and delta-HCH, giving alpha- and delta-PCCH respectively, but not with the beta isomer. This chain is Hexachlorocyclohexane dehydrochlorinase 2, found in Sphingobium indicum (strain DSM 16412 / CCM 7286 / MTCC 6364 / B90A).